The primary structure comprises 1300 residues: ATP-dependent RNA helicase HrpA (1300 aa).

A Helicase ATP-binding domain is found at 87 to 250; that stretch reads LEAIRDHQVV…FNNAPIIEVS (164 aa). 100–107 is an ATP binding site; it reads GETGSGKT. Positions 197 to 200 match the DEAH box motif; it reads DEAH. A Helicase C-terminal domain is found at 274–444; it reads QLQAIFDAVD…SVILQMTALG (171 aa).

The protein belongs to the DEAD box helicase family. DEAH subfamily.

It carries out the reaction ATP + H2O = ADP + phosphate + H(+). Functionally, not yet known. This chain is ATP-dependent RNA helicase HrpA (hrpA), found in Escherichia coli (strain K12).